We begin with the raw amino-acid sequence, 238 residues long: Uridylate kinase (238 aa).

ATP is bound at residue 12 to 15 (KLSG). Residue G54 coordinates UMP. ATP contacts are provided by G55 and R59. UMP is bound by residues D74 and 135–142 (TGNPFFTT). ATP contacts are provided by T162, Y168, and D171.

The protein belongs to the UMP kinase family. Homohexamer.

The protein localises to the cytoplasm. The enzyme catalyses UMP + ATP = UDP + ADP. Its pathway is pyrimidine metabolism; CTP biosynthesis via de novo pathway; UDP from UMP (UMPK route): step 1/1. Inhibited by UTP. Catalyzes the reversible phosphorylation of UMP to UDP. This is Uridylate kinase from Janthinobacterium sp. (strain Marseille) (Minibacterium massiliensis).